We begin with the raw amino-acid sequence, 190 residues long: Threonylcarbamoyl-AMP synthase (190 aa).

The 184-residue stretch at 7–190 (GDAIAAAIDV…ALTGELFRQG (184 aa)) folds into the YrdC-like domain.

This sequence belongs to the SUA5 family. TsaC subfamily.

It localises to the cytoplasm. The enzyme catalyses L-threonine + hydrogencarbonate + ATP = L-threonylcarbamoyladenylate + diphosphate + H2O. In terms of biological role, required for the formation of a threonylcarbamoyl group on adenosine at position 37 (t(6)A37) in tRNAs that read codons beginning with adenine. Catalyzes the conversion of L-threonine, HCO(3)(-)/CO(2) and ATP to give threonylcarbamoyl-AMP (TC-AMP) as the acyladenylate intermediate, with the release of diphosphate. This chain is Threonylcarbamoyl-AMP synthase, found in Shigella boydii serotype 4 (strain Sb227).